We begin with the raw amino-acid sequence, 1203 residues long: DNA-directed RNA polymerase subunit beta (1203 aa).

Over residues 1174–1195 the composition is skewed to basic and acidic residues; that stretch reads AAQEAKAAFEAEEAEKATKAEA. A disordered region spans residues 1174–1203; it reads AAQEAKAAFEAEEAEKATKAEATEEAAEQE.

Belongs to the RNA polymerase beta chain family. In terms of assembly, the RNAP catalytic core consists of 2 alpha, 1 beta, 1 beta' and 1 omega subunit. When a sigma factor is associated with the core the holoenzyme is formed, which can initiate transcription.

It carries out the reaction RNA(n) + a ribonucleoside 5'-triphosphate = RNA(n+1) + diphosphate. Functionally, DNA-dependent RNA polymerase catalyzes the transcription of DNA into RNA using the four ribonucleoside triphosphates as substrates. This chain is DNA-directed RNA polymerase subunit beta, found in Streptococcus pneumoniae (strain ATCC 700669 / Spain 23F-1).